The primary structure comprises 1177 residues: Tyrosine-protein kinase hopscotch (1177 aa).

The tract at residues methionine 1–isoleucine 41 is disordered. A compositionally biased stretch (polar residues) spans serine 16–isoleucine 41. Phosphoserine is present on residues serine 40 and serine 321. The FERM domain occupies glycine 46 to methionine 414. In terms of domain architecture, SH2; atypical spans histidine 433–lysine 539. Protein kinase domains lie at tyrosine 582 to leucine 843 and tyrosine 892 to aspartate 1164. ATP-binding positions include isoleucine 898 to valine 906 and lysine 926. Residue aspartate 1014 is the Proton acceptor of the active site. A phosphotyrosine; by autocatalysis mark is found at tyrosine 1047 and tyrosine 1048. The segment at lysine 1158–glutamate 1177 is disordered.

Belongs to the protein kinase superfamily. Tyr protein kinase family. JAK subfamily. Forms a complex with Hsp83 and piwi; probably Hop mediates the interaction between piwi and Hsp83.

It is found in the endomembrane system. It catalyses the reaction L-tyrosyl-[protein] + ATP = O-phospho-L-tyrosyl-[protein] + ADP + H(+). In terms of biological role, tyrosine kinase of the non-receptor type, phosphorylates the marelle protein. Required maternally for the establishment of the normal array of embryonic segments: involved in the control of pair-rule gene transcription in a stripe-specific manner. Together with Hsp83 and piwi, mediates canalization, also known as developmental robustness, likely via epigenetic silencing of existing genetic variants and suppression of transposon-induced new genetic variation. The chain is Tyrosine-protein kinase hopscotch (hop) from Drosophila melanogaster (Fruit fly).